The following is a 243-amino-acid chain: 35 kDa gas vesicle protein (243 aa).

It belongs to the gas vesicle GvpC family.

The protein localises to the gas vesicle shell. Its function is as follows. May confer stability to the gas vesicle shells. Gas vesicles are small, hollow, gas filled protein structures that are found in several microbial planktonic microorganisms. They allow the positioning of the organism at the favorable depth for growth. The sequence is that of 35 kDa gas vesicle protein from Dactylococcopsis salina (strain PCC 8305) (Myxobactron salinum).